A 352-amino-acid chain; its full sequence is Ubiquitin thioesterase otulin (352 aa).

Residues 1 to 48 (MSRGTMPQPEAWPGASCAETPAREAAATARDGGKAAASGQPRPEMQCP) are disordered. The segment covering 18–37 (AETPAREAAATARDGGKAAA) has biased composition (low complexity). A PIM motif motif is present at residues 52–57 (EEDMYR). Position 56 is a phosphotyrosine (Y56). 2 linear diubiquitin binding regions span residues 95 to 96 (EW) and 124 to 126 (RGD). Residues 118–346 (TSIRRVRGDN…DRHYNIPVRV (229 aa)) enclose the OTU domain. The active site involves D126. Residue C129 is the Nucleophile of the active site. Linear diubiquitin binding stretches follow at residues 255–259 (FFSVL), 283–289 (TGGLEQV), and 336–338 (DDR). H339 is a catalytic residue.

It belongs to the peptidase C65 family. Otulin subfamily. Interacts (via the PUB domain) with RNF31 (via the PIM motif); the interaction is direct. Interacts with DVL2. Post-translationally, ubiquitinated. Acetylated. In terms of processing, phosphorylated. Phosphorylation at Tyr-56 prevents interaction with RNF31; dephosphorylation promotes interaction with RNF31 and the LUBAC complex.

The protein resides in the cytoplasm. The enzyme catalyses Thiol-dependent hydrolysis of ester, thioester, amide, peptide and isopeptide bonds formed by the C-terminal Gly of ubiquitin (a 76-residue protein attached to proteins as an intracellular targeting signal).. Deubiquitinase that specifically removes linear ('Met-1'-linked) polyubiquitin chains to substrates and acts as a regulator of angiogenesis and innate immune response. Required during angiogenesis, craniofacial and neuronal development by regulating the canonical Wnt signaling together with the LUBAC complex. Acts as a negative regulator of NF-kappa-B by regulating the activity of the LUBAC complex. OTULIN function is mainly restricted to homeostasis of the LUBAC complex: acts by removing 'Met-1'-linked autoubiquitination of the LUBAC complex, thereby preventing inactivation of the LUBAC complex. Acts as a key negative regulator of inflammation by restricting spontaneous inflammation and maintaining immune homeostasis. In myeloid cell, required to prevent unwarranted secretion of cytokines leading to inflammation and autoimmunity by restricting linear polyubiquitin formation. Plays a role in innate immune response by restricting linear polyubiquitin formation on LUBAC complex in response to NOD2 stimulation, probably to limit NOD2-dependent pro-inflammatory signaling. In Homo sapiens (Human), this protein is Ubiquitin thioesterase otulin.